The sequence spans 159 residues: Putative ribosomal RNA large subunit methyltransferase H (159 aa).

S-adenosyl-L-methionine-binding positions include L76, G108, and 127-132 (LSAMTF).

The protein belongs to the RNA methyltransferase RlmH family.

Its subcellular location is the cytoplasm. The enzyme catalyses pseudouridine(1915) in 23S rRNA + S-adenosyl-L-methionine = N(3)-methylpseudouridine(1915) in 23S rRNA + S-adenosyl-L-homocysteine + H(+). Its function is as follows. Specifically methylates the pseudouridine at position 1915 (m3Psi1915) in 23S rRNA. This chain is Putative ribosomal RNA large subunit methyltransferase H, found in Methanospirillum hungatei JF-1 (strain ATCC 27890 / DSM 864 / NBRC 100397 / JF-1).